A 111-amino-acid polypeptide reads, in one-letter code: MAASAARGAMALRTNIGRPVAFVRKIPWTAASSELREHFAQFGHVRKCTVPFDKETGFHKGMGWIHFSSEEELHNALQQENHVIDGVKLHVQPQRPKALQGDQTSDEEKDF.

The 78-residue stretch at 19–96 folds into the RRM domain; sequence PVAFVRKIPW…VKLHVQPQRP (78 aa). Positions 92–111 are disordered; the sequence is QPQRPKALQGDQTSDEEKDF. Phosphothreonine is present on Thr104. Ser105 is subject to Phosphoserine.

The protein resides in the mitochondrion. Its subcellular location is the nucleus. RNA-binding protein that acts as a nuclear receptor corepressor. Probably acts by binding the SRA RNA, and repressing the SRA-mediated nuclear receptor coactivation. Binds the STR7 loop of SRA RNA. Also able to repress glucocorticoid (GR), androgen (AR), thyroid (TR) and VDR-mediated transactivation. The sequence is that of SRA stem-loop-interacting RNA-binding protein, mitochondrial (SLIRP) from Bos taurus (Bovine).